Reading from the N-terminus, the 604-residue chain is Membrane protein insertase YidC (604 aa).

Residues 8–28 traverse the membrane as a helical segment; it reads LYLAIGLSLLVLIGWNYFFAG. Residues 42 to 84 form a disordered region; it reads EQQAQTQTTSDTTARSDLNVPGQRSLPGESPQTQLSRPEALAA. Residues 43–58 show a composition bias toward low complexity; it reads QQAQTQTTSDTTARSD. 5 helical membrane-spanning segments follow: residues 349-369, 375-395, 449-469, 507-527, and 546-566; these read FDLL…FWIL, VVGN…AVFF, LPML…FVTI, MIGH…SMFF, and WMPV…VIYW.

The protein belongs to the OXA1/ALB3/YidC family. Type 1 subfamily. As to quaternary structure, interacts with the Sec translocase complex via SecD. Specifically interacts with transmembrane segments of nascent integral membrane proteins during membrane integration.

The protein localises to the cell inner membrane. In terms of biological role, required for the insertion and/or proper folding and/or complex formation of integral membrane proteins into the membrane. Involved in integration of membrane proteins that insert both dependently and independently of the Sec translocase complex, as well as at least some lipoproteins. Aids folding of multispanning membrane proteins. The protein is Membrane protein insertase YidC of Beijerinckia indica subsp. indica (strain ATCC 9039 / DSM 1715 / NCIMB 8712).